A 59-amino-acid polypeptide reads, in one-letter code: UPF0434 protein LHK_01103 (59 aa).

Belongs to the UPF0434 family.

The protein is UPF0434 protein LHK_01103 of Laribacter hongkongensis (strain HLHK9).